The chain runs to 329 residues: Acetyl-coenzyme A carboxylase carboxyl transferase subunit alpha (329 aa).

One can recognise a CoA carboxyltransferase C-terminal domain in the interval Gln40–Gln294.

The protein belongs to the AccA family. In terms of assembly, acetyl-CoA carboxylase is a heterohexamer composed of biotin carboxyl carrier protein (AccB), biotin carboxylase (AccC) and two subunits each of ACCase subunit alpha (AccA) and ACCase subunit beta (AccD).

It is found in the cytoplasm. It catalyses the reaction N(6)-carboxybiotinyl-L-lysyl-[protein] + acetyl-CoA = N(6)-biotinyl-L-lysyl-[protein] + malonyl-CoA. The protein operates within lipid metabolism; malonyl-CoA biosynthesis; malonyl-CoA from acetyl-CoA: step 1/1. Component of the acetyl coenzyme A carboxylase (ACC) complex. First, biotin carboxylase catalyzes the carboxylation of biotin on its carrier protein (BCCP) and then the CO(2) group is transferred by the carboxyltransferase to acetyl-CoA to form malonyl-CoA. The sequence is that of Acetyl-coenzyme A carboxylase carboxyl transferase subunit alpha from Synechococcus sp. (strain CC9605).